Reading from the N-terminus, the 417-residue chain is NADH-quinone oxidoreductase subunit D (417 aa).

Belongs to the complex I 49 kDa subunit family. As to quaternary structure, NDH-1 is composed of 14 different subunits. Subunits NuoB, C, D, E, F, and G constitute the peripheral sector of the complex.

The protein resides in the cell inner membrane. The enzyme catalyses a quinone + NADH + 5 H(+)(in) = a quinol + NAD(+) + 4 H(+)(out). NDH-1 shuttles electrons from NADH, via FMN and iron-sulfur (Fe-S) centers, to quinones in the respiratory chain. The immediate electron acceptor for the enzyme in this species is believed to be ubiquinone. Couples the redox reaction to proton translocation (for every two electrons transferred, four hydrogen ions are translocated across the cytoplasmic membrane), and thus conserves the redox energy in a proton gradient. This Verminephrobacter eiseniae (strain EF01-2) protein is NADH-quinone oxidoreductase subunit D.